We begin with the raw amino-acid sequence, 100 residues long: Urease subunit gamma (100 aa).

The protein belongs to the urease gamma subunit family. In terms of assembly, heterotrimer of UreA (gamma), UreB (beta) and UreC (alpha) subunits. Three heterotrimers associate to form the active enzyme.

It localises to the cytoplasm. The catalysed reaction is urea + 2 H2O + H(+) = hydrogencarbonate + 2 NH4(+). The protein operates within nitrogen metabolism; urea degradation; CO(2) and NH(3) from urea (urease route): step 1/1. This chain is Urease subunit gamma, found in Acinetobacter baylyi (strain ATCC 33305 / BD413 / ADP1).